We begin with the raw amino-acid sequence, 1996 residues long: Non-reducing polyketide synthase atnG (1996 aa).

The tract at residues Phe-9–His-245 is N-terminal acylcarrier protein transacylase (SAT) domain. The 429-residue stretch at Ser-366–Glu-794 folds into the Ketosynthase family 3 (KS3) domain. Residues Cys-538, His-673, and His-713 each act as for beta-ketoacyl synthase activity in the active site. The malonyl-CoA:ACP transacylase (MAT) domain stretch occupies residues Ala-891–Cys-1150. The active-site For acyl/malonyl transferase activity is the Ser-982. The N-terminal hotdog fold stretch occupies residues His-1263–Asp-1392. The PKS/mFAS DH domain occupies His-1263–His-1569. Positions Ser-1267 to Leu-1568 are product template (PT) domain. The Proton acceptor; for dehydratase activity role is filled by His-1295. Residues Ala-1416–His-1569 form a C-terminal hotdog fold region. Catalysis depends on Asp-1481, which acts as the Proton donor; for dehydratase activity. Positions Gly-1573–His-1621 are disordered. Residues Pro-1594–Gln-1607 show a composition bias toward polar residues. Residues Gly-1620–Glu-1697 form the Carrier domain. An O-(pantetheine 4'-phosphoryl)serine modification is found at Ser-1657. Positions Lys-1725–Lys-1923 are thioesterase (TE) domain.

The protein operates within secondary metabolite biosynthesis; terpenoid biosynthesis. Non-reducing polyketide synthase; part of the gene cluster that mediates the biosynthesis of the meroterpenoids arthripenoids. The pathway begins with the HR-PKS atnH that catalyzes two chain-extension steps to form a reduced triketide, which then primes the SAT domain in the NR-PKS atnG to initiate three more cycles of extension to give a linear hexaketide corresponding to the polyketide part of arthripenoids. The FAD-dependent monooxygenase atnJ then performs an oxidative decarboxylation at C11 of the atnH/atnG product, via an electrophilic aromatic hydroxylation with concomitant ipso-decarboxylation. The membrane-bound polyprenyl transferase atnF then introduces a farnesyl group before the FAD-dependent monooxygenase atnK functions as the first epoxidase on terminal C12'-C13' olefin, followed by a second epoxidation on C7'-C8' catalyzed by atnA. The terpene cyclase/mutase atnI then initiates the sequential tricyclic ring formation through protonation of the terminal epoxide and catalyzes the regioselective and stereoselective 6/6/6-tricyclic ring formation. The cytochrome P450 monooxygenase atnM is responsible for hydroxylating both C1' and C10'. The next steps may involve ketoreduction and acetyl transfer by the ketoreductase atnB and the acetyltransferase atnC, and lead to the production of arthripenoid B, the final biosynthetic product of the atn cluster. The hydroquinone moiety in arthripenoid B is prone to undergo spontaneous oxidation to afford a benzoquinone compound, a key intermediate for generating structure diversity. For instance, addition of a cysteine followed by ring contraction gives arthripenoid A, tautomerization gives the main product arthripenoid C, addition of a molecular of water or amine affords arthripenoid D or E, respectively, and loss of one water forms arthripenoid F. The polypeptide is Non-reducing polyketide synthase atnG (Arthrinium sp).